Consider the following 288-residue polypeptide: Shikimate dehydrogenase (NADP(+)) (288 aa).

Residues 15–17 (SKS) and T64 contribute to the shikimate site. The active-site Proton acceptor is the K68. Position 83 (E83) interacts with NADP(+). Shikimate contacts are provided by N92 and D117. NADP(+) contacts are provided by residues 141–145 (GAGGA), 165–170 (NRTVSK), and M232. Y234 is a binding site for shikimate. An NADP(+)-binding site is contributed by G254.

Belongs to the shikimate dehydrogenase family. In terms of assembly, homodimer.

The catalysed reaction is shikimate + NADP(+) = 3-dehydroshikimate + NADPH + H(+). Its pathway is metabolic intermediate biosynthesis; chorismate biosynthesis; chorismate from D-erythrose 4-phosphate and phosphoenolpyruvate: step 4/7. Its function is as follows. Involved in the biosynthesis of the chorismate, which leads to the biosynthesis of aromatic amino acids. Catalyzes the reversible NADPH linked reduction of 3-dehydroshikimate (DHSA) to yield shikimate (SA). The sequence is that of Shikimate dehydrogenase (NADP(+)) from Psychrobacter cryohalolentis (strain ATCC BAA-1226 / DSM 17306 / VKM B-2378 / K5).